Consider the following 470-residue polypeptide: Ribulose bisphosphate carboxylase large chain (470 aa).

Substrate-binding residues include N115 and T165. The Proton acceptor role is filled by K167. K169 serves as a coordination point for substrate. K193, D195, and E196 together coordinate Mg(2+). At K193 the chain carries N6-carboxylysine. H286 functions as the Proton acceptor in the catalytic mechanism. 3 residues coordinate substrate: R287, H319, and S371.

This sequence belongs to the RuBisCO large chain family. Type I subfamily. Heterohexadecamer of 8 large chains and 8 small chains. Mg(2+) serves as cofactor.

Its subcellular location is the carboxysome. The enzyme catalyses 2 (2R)-3-phosphoglycerate + 2 H(+) = D-ribulose 1,5-bisphosphate + CO2 + H2O. It carries out the reaction D-ribulose 1,5-bisphosphate + O2 = 2-phosphoglycolate + (2R)-3-phosphoglycerate + 2 H(+). Functionally, ruBisCO catalyzes two reactions: the carboxylation of D-ribulose 1,5-bisphosphate, the primary event in carbon dioxide fixation, as well as the oxidative fragmentation of the pentose substrate in the photorespiration process. Both reactions occur simultaneously and in competition at the same active site. The sequence is that of Ribulose bisphosphate carboxylase large chain from Synechococcus sp. (strain CC9902).